The sequence spans 94 residues: Integration host factor subunit beta (94 aa).

This sequence belongs to the bacterial histone-like protein family. In terms of assembly, heterodimer of an alpha and a beta chain.

Its function is as follows. This protein is one of the two subunits of integration host factor, a specific DNA-binding protein that functions in genetic recombination as well as in transcriptional and translational control. This is Integration host factor subunit beta from Escherichia coli (strain UTI89 / UPEC).